We begin with the raw amino-acid sequence, 277 residues long: MQHESPTHGMNMSALRRHKQRLDLADETVAIEVPGLNLFYGDKQALFDIALNIPKQKVTSFIGPSGCGKSTLLRSFNRMNDLVDGCRIEGAINLYGHNIYTKGEEVAELRRRVGMVFQKPNPFPKTIYENVVYGLRIQGINKKRVLDEAVEWALKAAALWDEVKDRLHESALGLSGGQQQRLVIARTIAVEPEVLLLDEPCSALDPISTLKVEELIYELKSKYTIVIVTHNMQQAARVSDYTAFMYMGKLVEFGDTDTLFTNPAKKQTEDYITGRYG.

One can recognise an ABC transporter domain in the interval 31–272 (IEVPGLNLFY…PAKKQTEDYI (242 aa)). An ATP-binding site is contributed by 63 to 70 (GPSGCGKS).

Belongs to the ABC transporter superfamily. Phosphate importer (TC 3.A.1.7) family. In terms of assembly, the complex is composed of two ATP-binding proteins (PstB), two transmembrane proteins (PstC and PstA) and a solute-binding protein (PstS).

It localises to the cell inner membrane. It carries out the reaction phosphate(out) + ATP + H2O = ADP + 2 phosphate(in) + H(+). Its function is as follows. Part of the ABC transporter complex PstSACB involved in phosphate import. Responsible for energy coupling to the transport system. The chain is Phosphate import ATP-binding protein PstB 2 from Pseudomonas savastanoi pv. phaseolicola (strain 1448A / Race 6) (Pseudomonas syringae pv. phaseolicola (strain 1448A / Race 6)).